Consider the following 176-residue polypeptide: Protein FimF (176 aa).

A signal peptide spans 1–20 (MRNKPFYLLCAFLWLAVSHA). A disulfide bridge connects residues Cys-38 and Cys-78.

It belongs to the fimbrial protein family.

The protein localises to the fimbrium. Functionally, involved in regulation of length and mediation of adhesion of type 1 fimbriae (but not necessary for the production of fimbriae). Involved in the integration of FimH in the fimbriae. In Escherichia coli (strain K12), this protein is Protein FimF (fimF).